We begin with the raw amino-acid sequence, 168 residues long: Plastocyanin, chloroplastic (168 aa).

The transit peptide at 1–70 (MASVAAAAVS…SSLLLVASAN (70 aa)) directs the protein to the chloroplast. The Plastocyanin-like domain occupies 71–168 (AATVKMGGDD…AGMKGVVTVS (98 aa)). Residues histidine 108, cysteine 153, histidine 156, and methionine 161 each coordinate Cu cation.

The protein belongs to the plastocyanin family. Cu(2+) serves as cofactor.

It is found in the plastid. The protein localises to the chloroplast thylakoid membrane. Participates in electron transfer between P700 and the cytochrome b6-f complex in photosystem I. The polypeptide is Plastocyanin, chloroplastic (PETE) (Physcomitrium patens (Spreading-leaved earth moss)).